The sequence spans 135 residues: Sex-regulated protein janus-A (135 aa).

Lysine 37 provides a ligand contact to substrate. Histidine 63 (proton acceptor) is an active-site residue. Residue 104–106 (SQG) participates in substrate binding.

This sequence belongs to the janus family.

JanA and janB regulate somatic sex differentiation. The sequence is that of Sex-regulated protein janus-A (janA) from Drosophila mauritiana (Fruit fly).